Reading from the N-terminus, the 313-residue chain is Olfactory receptor 1J1 (313 aa).

The Extracellular segment spans residues 1-25; it reads MRLKNHSSVSEFLLLGFPIRPEQGG. N5 carries N-linked (GlcNAc...) asparagine glycosylation. A helical membrane pass occupies residues 26-46; the sequence is IFFSLFLAMYLITVLGNLLII. Residues 47 to 57 are Cytoplasmic-facing; sequence LLIRLDSHLHT. The helical transmembrane segment at 58 to 78 threads the bilayer; the sequence is PMYFFLSHLAFTDISFSSVTV. The Extracellular segment spans residues 79–97; it reads PKMLTKVQNQPIPITYEEC. An intrachain disulfide couples C97 to C189. Residues 98–118 form a helical membrane-spanning segment; the sequence is VSQTYFFIFFADLDSFLITSM. The Cytoplasmic segment spans residues 119 to 142; sequence AYDRYMAICHPLHYITIMSQSRCA. The chain crosses the membrane as a helical span at residues 143 to 163; it reads MLVAVSWVIASACALLHSLLL. The Extracellular segment spans residues 164–196; that stretch reads DQLSFCADHTVPHFFCDLGALLKLSCSDTSLNQ. The helical transmembrane segment at 197–217 threads the bilayer; sequence LVIFTAGLAAIMLPFLCILIS. Residues 218-240 lie on the Cytoplasmic side of the membrane; that stretch reads YGRIGFTILQVPTTKGICKALST. The helical transmembrane segment at 241–261 threads the bilayer; it reads CGSHLSVVALYYGSIIGLYFL. Residues 262 to 271 lie on the Extracellular side of the membrane; sequence PPSNSKINNN. A helical membrane pass occupies residues 272–292; it reads IVASVMYTVVTPMLNPFIYSL. Residues 293–313 are Cytoplasmic-facing; that stretch reads RNKDMKGALKKLLSKKTEFSK.

It belongs to the G-protein coupled receptor 1 family.

It localises to the cell membrane. Functionally, odorant receptor. The chain is Olfactory receptor 1J1 from Mus musculus (Mouse).